Here is a 479-residue protein sequence, read N- to C-terminus: Something about silencing protein 10 (479 aa).

The segment covering 1–10 has biased composition (basic residues); that stretch reads MVGRSRRRGA. Disordered regions lie at residues 1–45 and 62–166; these read MVGR…SYYQ and KGWN…EEAQ. Arginine 8 is subject to Omega-N-methylarginine. A compositionally biased stretch (low complexity) spans 11–21; it reads AKWAAVRAKAG. A Phosphoserine modification is found at serine 37. Over residues 69–111 the composition is skewed to acidic residues; the sequence is SGDEEDGEEEEEEVLALDMDDEDDEDGGNAGEEEEEENADDDG. Residue lysine 144 is modified to N6-acetyllysine; alternate. A Glycyl lysine isopeptide (Lys-Gly) (interchain with G-Cter in SUMO2); alternate cross-link involves residue lysine 144. Position 150 is a phosphoserine (serine 150). A compositionally biased stretch (acidic residues) spans 153–165; sequence EAEEEEREEEEEA. Residue threonine 362 is modified to Phosphothreonine. Phosphoserine is present on residues serine 365 and serine 368. Arginine 385 is modified (citrulline). Residues 419–466 are disordered; it reads RGLTPRRKKIDRNPRVKHREKFRRAKIRRRGQVREVRKEEQRYSGELS. Residues 422-449 are compositionally biased toward basic residues; sequence TPRRKKIDRNPRVKHREKFRRAKIRRRG. Residues 450–461 are compositionally biased toward basic and acidic residues; sequence QVREVRKEEQRY.

It belongs to the SAS10 family. In terms of assembly, part of the small subunit (SSU) processome, composed of more than 70 proteins and the RNA chaperone small nucleolar RNA (snoRNA) U3. Citrullinated by PADI4.

The protein resides in the nucleus. The protein localises to the nucleolus. Essential for gene silencing: has a role in the structure of silenced chromatin. Plays a role in the developing brain. Part of the small subunit (SSU) processome, first precursor of the small eukaryotic ribosomal subunit. During the assembly of the SSU processome in the nucleolus, many ribosome biogenesis factors, an RNA chaperone and ribosomal proteins associate with the nascent pre-rRNA and work in concert to generate RNA folding, modifications, rearrangements and cleavage as well as targeted degradation of pre-ribosomal RNA by the RNA exosome. The polypeptide is Something about silencing protein 10 (Homo sapiens (Human)).